Consider the following 957-residue polypeptide: Exoribonuclease II, mitochondrial (957 aa).

The N-terminal 54 residues, 1–54 (MNYRQLFLLQNVNLESNYLLKRVCLSLKLSPCKLTRKFHHACPSSSKVLKYFRI), are a transit peptide targeting the mitochondrion. Positions 503–843 (RVDLRHLKAF…FTHHQIQSVL (341 aa)) constitute an RNB domain.

The protein belongs to the RNR ribonuclease family.

It is found in the mitochondrion. It catalyses the reaction Exonucleolytic cleavage in the 3'- to 5'-direction to yield nucleoside 5'-phosphates.. Functionally, required for intron-independent turnover and processing of mitochondrial RNA. Participates in 3'-mtRNA processing where it hydrolyzes single-stranded RNA or partially double-stranded RNA with 3'-single-stranded tails. The protein is Exoribonuclease II, mitochondrial (rpm1) of Schizosaccharomyces pombe (strain 972 / ATCC 24843) (Fission yeast).